Here is a 241-residue protein sequence, read N- to C-terminus: Ribosomal RNA small subunit methyltransferase J (241 aa).

Residues 94–95 (RD) and aspartate 163 each bind S-adenosyl-L-methionine.

It belongs to the methyltransferase superfamily. RsmJ family.

The protein localises to the cytoplasm. It catalyses the reaction guanosine(1516) in 16S rRNA + S-adenosyl-L-methionine = N(2)-methylguanosine(1516) in 16S rRNA + S-adenosyl-L-homocysteine + H(+). Specifically methylates the guanosine in position 1516 of 16S rRNA. The polypeptide is Ribosomal RNA small subunit methyltransferase J (Francisella tularensis subsp. novicida (strain U112)).